Reading from the N-terminus, the 382-residue chain is Enoyl-[acyl-carrier-protein] reductase, mitochondrial (382 aa).

The transit peptide at 1-17 (MSSFLSKRFLSFSQRAM) directs the protein to the mitochondrion. Tyr-77 acts as the Proton donor in catalysis. Residues Asn-159, 187–190 (TSSV), 210–212 (RDR), 285–288 (YGGM), 310–312 (FWV), and Lys-375 contribute to the NADP(+) site.

The protein belongs to the zinc-containing alcohol dehydrogenase family. Quinone oxidoreductase subfamily. In terms of assembly, homodimer.

The protein localises to the mitochondrion matrix. The enzyme catalyses a 2,3-saturated acyl-[ACP] + NADP(+) = a (2E)-enoyl-[ACP] + NADPH + H(+). Catalyzes the NADPH-dependent reduction of trans-2-enoyl thioesters in mitochondrial fatty acid synthesis (fatty acid synthesis type II). Fatty acid chain elongation in mitochondria uses acyl carrier protein (ACP) as an acyl group carrier, but the enzyme accepts both ACP and CoA thioesters as substrates in vitro. Required for respiration and the maintenance of the mitochondrial compartment. This is Enoyl-[acyl-carrier-protein] reductase, mitochondrial (ETR1) from Kluyveromyces lactis (strain ATCC 8585 / CBS 2359 / DSM 70799 / NBRC 1267 / NRRL Y-1140 / WM37) (Yeast).